A 163-amino-acid chain; its full sequence is Large ribosomal subunit protein uL22c (163 aa).

It belongs to the universal ribosomal protein uL22 family. Part of the 50S ribosomal subunit.

The protein resides in the plastid. It is found in the chloroplast. This protein binds specifically to 23S rRNA. Functionally, the globular domain of the protein is located near the polypeptide exit tunnel on the outside of the subunit, while an extended beta-hairpin is found that lines the wall of the exit tunnel in the center of the 70S ribosome. This is Large ribosomal subunit protein uL22c (rpl22) from Lobularia maritima (Sweet alyssum).